Consider the following 406-residue polypeptide: 5-hydroxytryptamine receptor 4 (406 aa).

At 1–19 (MDRLDANVSSNEGFGSVEK) the chain is on the extracellular side. The N-linked (GlcNAc...) asparagine glycan is linked to asparagine 7. The helical transmembrane segment at 20 to 44 (VVLLTFFAMVILMAILGNLLVMVAV) threads the bilayer. Topologically, residues 45–54 (CRDRQLRKIK) are cytoplasmic. Residues 55-78 (TNYFIVSLAFADLLVSVLVNAFGA) form a helical membrane-spanning segment. The Extracellular portion of the chain corresponds to 79–92 (IELVQDIWFYGEMF). The chain crosses the membrane as a helical span at residues 93–117 (CLVRTSLDVLLTTASIFHLCCISLD). Cysteine 93 and cysteine 184 form a disulfide bridge. Position 100 (aspartate 100) interacts with serotonin. Topologically, residues 118-133 (RYYAICCQPLVYRNKM) are cytoplasmic. Residues 134 to 157 (TPLRIALMLGGCWVIPMFISFLPI) form a helical membrane-spanning segment. Residues 158 to 188 (MQGWNNIGIVDVIEKRKFNHNSNSTFCVFMV) lie on the Extracellular side of the membrane. A helical transmembrane segment spans residues 189–212 (NKPYAITCSVVAFYIPFLLMVLAY). At 213 to 257 (YRIYVTAKEHAQQIQMLQRAGATSESRPQTADQHSTHRMRTETKA) the chain is on the cytoplasmic side. Residues 258 to 283 (AKTLCVIMGCFCFCWAPFFVTNIVDP) traverse the membrane as a helical segment. Residue asparagine 279 participates in serotonin binding. Residues 284–290 (FIDYTVP) lie on the Extracellular side of the membrane. A helical transmembrane segment spans residues 291 to 314 (EKVWTAFLWLGYINSGLNPFLYAF). The Cytoplasmic segment spans residues 315 to 406 (LNKSFRRAFL…DSCSLKRSQS (92 aa)).

Belongs to the G-protein coupled receptor 1 family. As to quaternary structure, interacts (via C-terminus 330-346 AA) with GRK5; this interaction is promoted by 5-HT (serotonin). In brain, isoform 5-HT4S is restricted to the striatum. In peripheral tissues, differential expression is also observed in the atrium of the heart where only isoform 5-HT4S is detectable. In terms of tissue distribution, in brain, isoform 5-HT4L is expressed throughout the brain, except in the cerebellum.

Its subcellular location is the cell membrane. The protein localises to the endosome membrane. In terms of biological role, G-protein coupled receptor for 5-hydroxytryptamine (serotonin), a biogenic hormone that functions as a neurotransmitter, a hormone and a mitogen. Ligand binding causes a conformation change that triggers signaling via guanine nucleotide-binding proteins (G proteins) and modulates the activity of downstream effectors. HTR4 is coupled to G(s) G alpha proteins and mediates activation of adenylate cyclase activity. The chain is 5-hydroxytryptamine receptor 4 (Htr4) from Rattus norvegicus (Rat).